A 307-amino-acid polypeptide reads, in one-letter code: UDP-3-O-acyl-N-acetylglucosamine deacetylase (307 aa).

Residues His78, His241, and Asp245 each coordinate Zn(2+). The Proton donor role is filled by His268.

This sequence belongs to the LpxC family. Zn(2+) is required as a cofactor.

It catalyses the reaction a UDP-3-O-[(3R)-3-hydroxyacyl]-N-acetyl-alpha-D-glucosamine + H2O = a UDP-3-O-[(3R)-3-hydroxyacyl]-alpha-D-glucosamine + acetate. It functions in the pathway glycolipid biosynthesis; lipid IV(A) biosynthesis; lipid IV(A) from (3R)-3-hydroxytetradecanoyl-[acyl-carrier-protein] and UDP-N-acetyl-alpha-D-glucosamine: step 2/6. Functionally, catalyzes the hydrolysis of UDP-3-O-myristoyl-N-acetylglucosamine to form UDP-3-O-myristoylglucosamine and acetate, the committed step in lipid A biosynthesis. The chain is UDP-3-O-acyl-N-acetylglucosamine deacetylase from Bordetella avium (strain 197N).